Consider the following 161-residue polypeptide: uncharacterized protein (161 aa).

The protein belongs to the sapovirus VP3 family.

This is an uncharacterized protein from Sapporo virus (isolate GI/Human/Germany/pJG-Sap01) (Hu/Dresden/pJG-Sap01/DE).